Reading from the N-terminus, the 428-residue chain is Enolase 1 (428 aa).

Gln167 contacts (2R)-2-phosphoglycerate. Glu209 serves as the catalytic Proton donor. Asp246, Glu288, and Asp315 together coordinate Mg(2+). 4 residues coordinate (2R)-2-phosphoglycerate: Lys340, Arg369, Ser370, and Lys391. Catalysis depends on Lys340, which acts as the Proton acceptor.

It belongs to the enolase family. In terms of assembly, component of the RNA degradosome, a multiprotein complex involved in RNA processing and mRNA degradation. Mg(2+) serves as cofactor.

Its subcellular location is the cytoplasm. It is found in the secreted. It localises to the cell surface. It catalyses the reaction (2R)-2-phosphoglycerate = phosphoenolpyruvate + H2O. It functions in the pathway carbohydrate degradation; glycolysis; pyruvate from D-glyceraldehyde 3-phosphate: step 4/5. Catalyzes the reversible conversion of 2-phosphoglycerate (2-PG) into phosphoenolpyruvate (PEP). It is essential for the degradation of carbohydrates via glycolysis. The protein is Enolase 1 of Pseudomonas syringae pv. syringae (strain B728a).